A 119-amino-acid polypeptide reads, in one-letter code: uncharacterized protein (119 aa).

A disordered region spans residues 1–20; that stretch reads MPHLAAEAHTWPPHISHSTL. The chain crosses the membrane as a helical span at residues 74–94; it reads LLFVVHQGHIGTGLIVFIICW.

It is found in the membrane. This is an uncharacterized protein from Saccharomyces cerevisiae (strain ATCC 204508 / S288c) (Baker's yeast).